Consider the following 55-residue polypeptide: Mannose/glucose-specific lectin alpha chain (55 aa).

It belongs to the leguminous lectin family. In terms of assembly, tetramer of two alpha and two beta chains.

In Lathyrus sativus (White vetchling), this protein is Mannose/glucose-specific lectin alpha chain.